Reading from the N-terminus, the 242-residue chain is Pyridoxine 5'-phosphate synthase (242 aa).

N9 provides a ligand contact to 3-amino-2-oxopropyl phosphate. 11–12 (DH) is a binding site for 1-deoxy-D-xylulose 5-phosphate. Residue R20 coordinates 3-amino-2-oxopropyl phosphate. H45 acts as the Proton acceptor in catalysis. Positions 47 and 52 each coordinate 1-deoxy-D-xylulose 5-phosphate. The active-site Proton acceptor is the E72. T102 is a 1-deoxy-D-xylulose 5-phosphate binding site. Residue H193 is the Proton donor of the active site. Residues G194 and 215–216 (GH) contribute to the 3-amino-2-oxopropyl phosphate site.

The protein belongs to the PNP synthase family. In terms of assembly, homooctamer; tetramer of dimers.

The protein localises to the cytoplasm. The enzyme catalyses 3-amino-2-oxopropyl phosphate + 1-deoxy-D-xylulose 5-phosphate = pyridoxine 5'-phosphate + phosphate + 2 H2O + H(+). The protein operates within cofactor biosynthesis; pyridoxine 5'-phosphate biosynthesis; pyridoxine 5'-phosphate from D-erythrose 4-phosphate: step 5/5. In terms of biological role, catalyzes the complicated ring closure reaction between the two acyclic compounds 1-deoxy-D-xylulose-5-phosphate (DXP) and 3-amino-2-oxopropyl phosphate (1-amino-acetone-3-phosphate or AAP) to form pyridoxine 5'-phosphate (PNP) and inorganic phosphate. The sequence is that of Pyridoxine 5'-phosphate synthase from Idiomarina loihiensis (strain ATCC BAA-735 / DSM 15497 / L2-TR).